A 714-amino-acid chain; its full sequence is Polyribonucleotide nucleotidyltransferase (714 aa).

The Mg(2+) site is built by Asp488 and Asp494. The 60-residue stretch at 555–614 folds into the KH domain; the sequence is PRIEVMNIPTDKIRDVIGSGGKVIREIVEKTGAKINIEDDGTVKIASSNGKEIEAAKKWI. Residues 624–692 form the S1 motif domain; that stretch reads GEIYEGTVVK…ERGKVRLSMK (69 aa).

It belongs to the polyribonucleotide nucleotidyltransferase family. Mg(2+) serves as cofactor.

The protein localises to the cytoplasm. It catalyses the reaction RNA(n+1) + phosphate = RNA(n) + a ribonucleoside 5'-diphosphate. Its function is as follows. Involved in mRNA degradation. Catalyzes the phosphorolysis of single-stranded polyribonucleotides processively in the 3'- to 5'-direction. This Brucella suis biovar 1 (strain 1330) protein is Polyribonucleotide nucleotidyltransferase.